The sequence spans 359 residues: tRNA/tmRNA (uracil-C(5))-methyltransferase (359 aa).

Residues glutamine 183, tyrosine 211, asparagine 216, glutamate 232, and aspartate 292 each coordinate S-adenosyl-L-methionine. Cysteine 317 acts as the Nucleophile in catalysis. Glutamate 351 serves as the catalytic Proton acceptor.

It belongs to the class I-like SAM-binding methyltransferase superfamily. RNA M5U methyltransferase family. TrmA subfamily.

The enzyme catalyses uridine(54) in tRNA + S-adenosyl-L-methionine = 5-methyluridine(54) in tRNA + S-adenosyl-L-homocysteine + H(+). The catalysed reaction is uridine(341) in tmRNA + S-adenosyl-L-methionine = 5-methyluridine(341) in tmRNA + S-adenosyl-L-homocysteine + H(+). Its function is as follows. Dual-specificity methyltransferase that catalyzes the formation of 5-methyluridine at position 54 (m5U54) in all tRNAs, and that of position 341 (m5U341) in tmRNA (transfer-mRNA). The chain is tRNA/tmRNA (uracil-C(5))-methyltransferase from Pseudomonas fluorescens (strain ATCC BAA-477 / NRRL B-23932 / Pf-5).